The sequence spans 227 residues: Cytidylate kinase (227 aa).

12-20 (GPSGAGKGT) contacts ATP.

The protein belongs to the cytidylate kinase family. Type 1 subfamily.

It localises to the cytoplasm. It carries out the reaction CMP + ATP = CDP + ADP. It catalyses the reaction dCMP + ATP = dCDP + ADP. The sequence is that of Cytidylate kinase from Shigella boydii serotype 4 (strain Sb227).